The chain runs to 321 residues: Sideroflexin-3 (321 aa).

Met1 is modified (N-acetylmethionine). Transmembrane regions (helical) follow at residues Leu146–Leu164, Leu174–Leu194, Ile225–Val245, and Leu266–Phe286.

The protein belongs to the sideroflexin family. Widely expressed.

The protein resides in the mitochondrion membrane. It carries out the reaction L-serine(in) = L-serine(out). In terms of biological role, mitochondrial serine transporter that mediates transport of serine into mitochondria, an important step of the one-carbon metabolism pathway. Mitochondrial serine is converted to glycine and formate, which then exits to the cytosol where it is used to generate the charged folates that serve as one-carbon donors. This Mus musculus (Mouse) protein is Sideroflexin-3.